Here is a 30-residue protein sequence, read N- to C-terminus: Hainantoxin F6-34.84 (30 aa).

2 disulfides stabilise this stretch: cysteine 2/cysteine 15 and cysteine 9/cysteine 24.

This sequence belongs to the AVIT (prokineticin) family. In terms of tissue distribution, expressed by the venom gland.

It is found in the secreted. This Cyriopagopus hainanus (Chinese bird spider) protein is Hainantoxin F6-34.84.